The following is a 156-amino-acid chain: Probable low-salt glycan biosynthesis epimerase Agl13 (156 aa).

Substrate-binding positions include arginine 19, glutamate 24, 39-41 (MSY), arginine 51, histidine 54, and histidine 109.

The protein belongs to the dTDP-4-dehydrorhamnose 3,5-epimerase family.

It functions in the pathway protein modification; protein glycosylation. The protein operates within cell surface structure biogenesis; S-layer biogenesis. In terms of biological role, epimerase involved in N-glycan biosynthetic pathway that takes place under low-salt conditions (1.75 M instead of 3.4 M). Participates in the formation of the tetrasaccharide present at 'Asn-532' of S-layer glycoprotein Csg, consisting of a sulfated hexose, 2 hexoses and rhamnose. Involved in the addition of final rhamnose (sugar 4) of the tetrasaccharide on the dolichol phosphate carrier. In Haloferax volcanii (strain ATCC 29605 / DSM 3757 / JCM 8879 / NBRC 14742 / NCIMB 2012 / VKM B-1768 / DS2) (Halobacterium volcanii), this protein is Probable low-salt glycan biosynthesis epimerase Agl13 (agl13).